We begin with the raw amino-acid sequence, 265 residues long: Energy-coupling factor transporter transmembrane protein EcfT (265 aa).

6 helical membrane-spanning segments follow: residues 26 to 46 (MVFVFIMMILIFLMNNWQTYA), 47 to 67 (VGIILIFIILKASNLSFMFLF), 72 to 92 (PILFLLIFTLLMHIFLTKGGA), 107 to 127 (VIMGIMISLRFILIIFLTTIM), 152 to 172 (LPVHELALMMSIALRFIPTLM), and 243 to 263 (HTYDTLSLLTLIPITLLILYL).

It belongs to the energy-coupling factor EcfT family. As to quaternary structure, forms a stable energy-coupling factor (ECF) transporter complex composed of 2 membrane-embedded substrate-binding proteins (S component), 2 ATP-binding proteins (A component) and 2 transmembrane proteins (T component). May be able to interact with more than 1 S component at a time.

The protein localises to the cell membrane. Transmembrane (T) component of an energy-coupling factor (ECF) ABC-transporter complex. Unlike classic ABC transporters this ECF transporter provides the energy necessary to transport a number of different substrates. This is Energy-coupling factor transporter transmembrane protein EcfT from Macrococcus caseolyticus (strain JCSC5402) (Macrococcoides caseolyticum).